The sequence spans 330 residues: Phosphate acyltransferase (330 aa).

This sequence belongs to the PlsX family. Homodimer. Probably interacts with PlsY.

It is found in the cytoplasm. It carries out the reaction a fatty acyl-[ACP] + phosphate = an acyl phosphate + holo-[ACP]. It participates in lipid metabolism; phospholipid metabolism. Functionally, catalyzes the reversible formation of acyl-phosphate (acyl-PO(4)) from acyl-[acyl-carrier-protein] (acyl-ACP). This enzyme utilizes acyl-ACP as fatty acyl donor, but not acyl-CoA. This Bacillus mycoides (strain KBAB4) (Bacillus weihenstephanensis) protein is Phosphate acyltransferase.